The following is a 534-amino-acid chain: Prolyl 4-hydroxylase subunit alpha-1 (534 aa).

The N-terminal stretch at 1-17 (MIWVVLMMAILLPQSLA) is a signal peptide. An N-linked (GlcNAc...) asparagine glycan is attached at asparagine 113. The TPR repeat unit spans residues 205–238 (VSVLDYLSYAVYQQGDLDKALLLTKKLLELDPEH). Residue asparagine 259 is glycosylated (N-linked (GlcNAc...) asparagine). Residues 411-519 (TAEELQVANY…KWVSNKWLHE (109 aa)) form the Fe2OG dioxygenase domain. Fe cation is bound by residues histidine 429, aspartate 431, and histidine 500. Position 510 (lysine 510) interacts with 2-oxoglutarate.

It belongs to the P4HA family. In terms of assembly, heterotetramer of two alpha-1 chains and two beta chains (P4HB)(the beta chain is the multi-functional PDI), where P4HB plays the role of a structural subunit; this tetramer catalyzes the formation of 4-hydroxyproline in collagen. It depends on Fe(2+) as a cofactor. L-ascorbate serves as cofactor. As to expression, expressed at least in brain, heart and lung.

It localises to the endoplasmic reticulum lumen. The catalysed reaction is L-prolyl-[collagen] + 2-oxoglutarate + O2 = trans-4-hydroxy-L-prolyl-[collagen] + succinate + CO2. Its activity is regulated as follows. Inhibited by poly(L-proline). Catalyzes the post-translational formation of 4-hydroxyproline in -Xaa-Pro-Gly- sequences in collagens and other proteins. The sequence is that of Prolyl 4-hydroxylase subunit alpha-1 (P4ha1) from Mus musculus (Mouse).